A 541-amino-acid polypeptide reads, in one-letter code: uncharacterized protein (541 aa).

Transmembrane regions (helical) follow at residues 4 to 23 (FVAN…LAIG), 30 to 47 (FSLG…FAAV), 57 to 79 (VYIL…AFFA), 91 to 113 (LAIT…IHLN), and 156 to 178 (LVAY…GLCA). 2 RCK C-terminal domains span residues 187–271 (QEAH…VLGD) and 273–354 (LPGD…LFGD). A run of 5 helical transmembrane segments spans residues 362–384 (FNLF…EVPL), 389–411 (ALSL…VGRS), 424–446 (LALR…GASF), 456–478 (LTII…VVGY), and 516–538 (LGYT…VVLF).

The protein belongs to the AAE transporter (TC 2.A.81) family.

The protein resides in the cell membrane. This is an uncharacterized protein from Corynebacterium diphtheriae (strain ATCC 700971 / NCTC 13129 / Biotype gravis).